The following is a 411-amino-acid chain: Serine--tRNA ligase (411 aa).

226-228 contributes to the L-serine binding site; sequence TSE. Residue 257–259 coordinates ATP; it reads RKE. Glu280 is a binding site for L-serine. Residue 344-347 participates in ATP binding; that stretch reads EISS. Ser379 contributes to the L-serine binding site.

It belongs to the class-II aminoacyl-tRNA synthetase family. Type-1 seryl-tRNA synthetase subfamily. In terms of assembly, homodimer. The tRNA molecule binds across the dimer.

The protein resides in the cytoplasm. The enzyme catalyses tRNA(Ser) + L-serine + ATP = L-seryl-tRNA(Ser) + AMP + diphosphate + H(+). It carries out the reaction tRNA(Sec) + L-serine + ATP = L-seryl-tRNA(Sec) + AMP + diphosphate + H(+). It participates in aminoacyl-tRNA biosynthesis; selenocysteinyl-tRNA(Sec) biosynthesis; L-seryl-tRNA(Sec) from L-serine and tRNA(Sec): step 1/1. In terms of biological role, catalyzes the attachment of serine to tRNA(Ser). Is also able to aminoacylate tRNA(Sec) with serine, to form the misacylated tRNA L-seryl-tRNA(Sec), which will be further converted into selenocysteinyl-tRNA(Sec). This is Serine--tRNA ligase from Campylobacter jejuni subsp. jejuni serotype O:23/36 (strain 81-176).